A 288-amino-acid chain; its full sequence is Small ribosomal subunit protein uS2 (288 aa).

Residues 267 to 288 form a disordered region; that stretch reads EEVEEVEEEFIPSEIEDEDEKF.

It belongs to the universal ribosomal protein uS2 family.

This Petrotoga mobilis (strain DSM 10674 / SJ95) protein is Small ribosomal subunit protein uS2.